Here is a 148-residue protein sequence, read N- to C-terminus: UPF0208 membrane protein HD_1715 (148 aa).

2 helical membrane-spanning segments follow: residues 41 to 60 and 66 to 88; these read AARF…YFFT and ILAN…LYWL.

Belongs to the UPF0208 family.

It is found in the cell inner membrane. The sequence is that of UPF0208 membrane protein HD_1715 from Haemophilus ducreyi (strain 35000HP / ATCC 700724).